The sequence spans 556 residues: Insulin-like growth factor 2 mRNA-binding protein 2 (556 aa).

2 RRM domains span residues 3 to 76 (NKLY…YSVS) and 82 to 157 (RKIQ…YIPD). S11 carries the phosphoserine modification. Residues 156–188 (PDEEVSSPSPPQRAQRGDHSSREQGHAPGGTSQ) form a disordered region. Residues S162 and S164 each carry the phosphoserine modification. Basic and acidic residues predominate over residues 170–180 (QRGDHSSREQG). 4 KH domains span residues 193 to 258 (DFPL…CRMI), 274 to 341 (EIPL…EIEI), 384 to 449 (QEIV…QGRI), and 466 to 532 (KLEA…QRKI). T507 bears the Phosphothreonine mark.

The protein belongs to the RRM IMP/VICKZ family. As to quaternary structure, can form homooligomers and heterooligomers with IGF2BP1 and IGF2BP3 in an RNA-dependent manner. Interacts with HNRPD. Interacts with IGF2BP1. Interacts with ELAVL1, DHX9, HNRNPU, MATR3 and PABPC1.

It is found in the nucleus. It localises to the cytoplasm. Its subcellular location is the P-body. The protein localises to the stress granule. In terms of biological role, RNA-binding factor that recruits target transcripts to cytoplasmic protein-RNA complexes (mRNPs). This transcript 'caging' into mRNPs allows mRNA transport and transient storage. It also modulates the rate and location at which target transcripts encounter the translational apparatus and shields them from endonuclease attacks or microRNA-mediated degradation. Preferentially binds to N6-methyladenosine (m6A)-containing mRNAs and increases their stability. Binds to the 5'-UTR of the insulin-like growth factor 2 (IGF2) mRNAs. Binding is isoform-specific. Binds to beta-actin/ACTB and MYC transcripts. Increases MYC mRNA stability by binding to the coding region instability determinant (CRD) and binding is enhanced by m6A-modification of the CRD. This Pongo abelii (Sumatran orangutan) protein is Insulin-like growth factor 2 mRNA-binding protein 2 (IGF2BP2).